The sequence spans 165 residues: Small ribosomal subunit protein uS5 (165 aa).

The 64-residue stretch at 13–76 (LEEKVLVVNR…EAARKNLITI (64 aa)) folds into the S5 DRBM domain.

Belongs to the universal ribosomal protein uS5 family. Part of the 30S ribosomal subunit. Contacts proteins S4 and S8.

Its function is as follows. With S4 and S12 plays an important role in translational accuracy. In terms of biological role, located at the back of the 30S subunit body where it stabilizes the conformation of the head with respect to the body. This is Small ribosomal subunit protein uS5 from Chlamydia abortus (strain DSM 27085 / S26/3) (Chlamydophila abortus).